We begin with the raw amino-acid sequence, 687 residues long: Phenylalanine aminomutase (L-beta-phenylalanine forming) (687 aa).

Catalysis depends on Tyr80, which acts as the Proton donor/acceptor. Positions 175 to 177 (ASG) form a cross-link, 5-imidazolinone (Ala-Gly). Position 176 is a 2,3-didehydroalanine (Ser) (Ser176). Residues Asn231, Gln319, Arg325, Asn355, Lys427, Glu455, and Asn458 each contribute to the (E)-cinnamate site.

Belongs to the PAL/histidase family. As to quaternary structure, homodimer. Homotetramer, dimer of dimers. Contains an active site 4-methylidene-imidazol-5-one (MIO), which is formed autocatalytically by cyclization and dehydration of residues Ala-Ser-Gly.

The protein localises to the cytoplasm. It carries out the reaction L-phenylalanine = L-beta-phenylalanine. It catalyses the reaction L-phenylalanine = (E)-cinnamate + NH4(+). Its pathway is alkaloid biosynthesis; taxol biosynthesis. It participates in phenylpropanoid metabolism; trans-cinnamate biosynthesis; trans-cinnamate from L-phenylalanine: step 1/1. Functionally, phenylalanine aminomutase that catalyzes the rearrangement of L-phenylalanine to R-beta-phenylalanine. Catalyzes the first committed step in the biosynthesis of the side chain of the alkaloid taxol (paclitaxel), a widely-used compound with antitumor activity. Also has low phenylalanine ammonia-lyase activity and can catalyze the amination of trans-cinnamate. The sequence is that of Phenylalanine aminomutase (L-beta-phenylalanine forming) (pam) from Taxus chinensis (Chinese yew).